We begin with the raw amino-acid sequence, 399 residues long: Chorismate synthase (399 aa).

Residues Arg40 and Arg46 each contribute to the NADP(+) site. FMN contacts are provided by residues 135–137 (RAS), 256–257 (QA), Gly301, 316–320 (KPIAT), and Arg342.

The protein belongs to the chorismate synthase family. Homotetramer. Requires FMNH2 as cofactor.

It carries out the reaction 5-O-(1-carboxyvinyl)-3-phosphoshikimate = chorismate + phosphate. It participates in metabolic intermediate biosynthesis; chorismate biosynthesis; chorismate from D-erythrose 4-phosphate and phosphoenolpyruvate: step 7/7. Its function is as follows. Catalyzes the anti-1,4-elimination of the C-3 phosphate and the C-6 proR hydrogen from 5-enolpyruvylshikimate-3-phosphate (EPSP) to yield chorismate, which is the branch point compound that serves as the starting substrate for the three terminal pathways of aromatic amino acid biosynthesis. This reaction introduces a second double bond into the aromatic ring system. This Arthrobacter sp. (strain FB24) protein is Chorismate synthase.